We begin with the raw amino-acid sequence, 207 residues long: Chloramphenicol acetyltransferase (207 aa).

His186 acts as the Proton acceptor in catalysis.

This sequence belongs to the chloramphenicol acetyltransferase family. In terms of assembly, homotrimer.

It catalyses the reaction chloramphenicol + acetyl-CoA = chloramphenicol 3-acetate + CoA. Functionally, this enzyme is an effector of chloramphenicol resistance in bacteria. The polypeptide is Chloramphenicol acetyltransferase (Campylobacter coli).